The primary structure comprises 121 residues: Small ribosomal subunit protein uS13 (121 aa).

The disordered stretch occupies residues 91-121 (HRRGLPVRGQKTKNNARTRKGPVKTVANKKK).

This sequence belongs to the universal ribosomal protein uS13 family. Part of the 30S ribosomal subunit. Forms a loose heterodimer with protein S19. Forms two bridges to the 50S subunit in the 70S ribosome.

In terms of biological role, located at the top of the head of the 30S subunit, it contacts several helices of the 16S rRNA. In the 70S ribosome it contacts the 23S rRNA (bridge B1a) and protein L5 of the 50S subunit (bridge B1b), connecting the 2 subunits; these bridges are implicated in subunit movement. Contacts the tRNAs in the A and P-sites. This Staphylococcus aureus (strain Mu3 / ATCC 700698) protein is Small ribosomal subunit protein uS13.